A 287-amino-acid chain; its full sequence is MDPHTEFFLGKDRENASSPLIAPSRKIGLISAKVKTNETYSLFGKKKNQTAGTHLQFTSLTIKWTPLCPVTAGGQLNLVIHHNSSTVPILNIWSPTSTKWQQEVHGNLGFLTVNNCPYLVEGRLVGFSGTEAGIISITLHMDFKLRTQDLSPCKLIPSLIDNLHGPSFLYTSYTEDSVPDTNIHHLKHCIEDLQASVHALCGGRVHITESQALSLIATFRVRIVELLEHQEGTAFLNYNLATIKNMLTVATTSVVSKSYRTCLSNILDKMVVYDEAYWKKVLASPEK.

Belongs to the nucleorhabdovirus type-1 movement protein family.

In terms of biological role, transports viral genome to neighboring plant cells directly through plasmosdesmata, without any budding. The movement protein allows efficient cell to cell propagation, by bypassing the host cell wall barrier. This Colocasia esculenta (Wild taro) protein is Movement protein (3).